A 1059-amino-acid polypeptide reads, in one-letter code: MSGVMVGSHADMAPASTAEGAGEKPGPAAPAPAAQYECGECGKSFRWSSRLLHHQRTHTGERPYKCPDCPKAFKGSSALLYHQRGHTGERPYQCPDCPKAFKRSSLLQIHRSVHTGLRAFICGQCGLAFKWSSHYQYHLRQHTGERPYPCPDCPKAFKNSSSLRRHRHVHTGERPYTCGVCGKSFTQSTNLRQHQRVHTGERPFRCPLCPKTFTHSSNLLLHQRTHGAAPAPGTASAAPPPQSREPGKVFVCDAYLQRHLQPHSPPAPPAPPPPPPPVVPELFLAAAETTVELVYRCDGCEQGFSSEELLLEHQPCPGPDAAPQPQEAPAEAPKADQPPSPLPQPPPPAAAPAPGFACLPCGKSFRTVAGLSRHQHSHGAAGGQAFRCGSCDGSFPQLASLLAHQQCHVEEAAAGRPPPQAEAAEVTCPQEPLAPAAPVPPPPPSAPASAERPYKCAECGKSFKGSSGLRYHLRDHTGERPYQCGECGKAFKRSSLLAIHQRVHTGLRAFTCGQCGLTFKWSSHYQYHLRLHSGERPYACGECGKAFRNTSCLRRHRHVHTGERPHACGVCGKSFAQTSNLRQHQRVHTGERPFRCPLCPKTFTHSSNLLLHQRTHSAERPFTCPICGRGFVMAAYLQRHLRTHAPANTPPSTTAPAAGPQPPAPLAAARAPPATQDVHVLPHLQATLSLEVAGGTAQAPSLGPAAPNSQTFLLVQTAQGLQLIPSSVQPPTPPPPPAPPKLILLPSSSAGAGGGRARQGPRAVGKAGQGAGVVWLPGPGGLGVQGAASAGASGTGQSLIVLQNVGGGEAGPQEMSGVQLQPLRPAPEVTTVQLQPAQEVTTVQLQPAQEVTTVQLQPAQEVTTVQLQPVAGQLSNSSGGAVATEAPNLLVVQSGAAEELLTGPGPGEAGDGEASTGVVQDVLFETLQTDEGLQSVLVLSGADGEQTRLCVQEVETLPPGLTEPPATGPPGQKLLIIRSAPATELLDSSNTGGGTATLQLLAPPPSGPASGPAGLPGAPASQMVQVVPAGAGPGVMTPQGLPSIQIVQTLPAVQLVHTF.

6 consecutive C2H2-type zinc fingers follow at residues 36 to 58, 64 to 86, 92 to 114, 120 to 142, 148 to 170, and 176 to 198; these read YECG…QRTH, YKCP…QRGH, YQCP…RSVH, FICG…LRQH, YPCP…RHVH, and YTCG…QRVH. Thr-199 carries the phosphothreonine modification. Residues 204 to 226 form a C2H2-type 7 zinc finger; sequence FRCPLCPKTFTHSSNLLLHQRTH. Disordered regions lie at residues 226-247, 260-280, and 312-351; these read HGAA…REPG, LQPH…PVVP, and EHQP…PAAA. Low complexity predominate over residues 228 to 237; sequence AAPAPGTASA. The segment covering 263–279 has biased composition (pro residues); the sequence is HSPPAPPAPPPPPPPVV. Residues 323 to 335 are compositionally biased toward low complexity; it reads PQPQEAPAEAPKA. Residues 336–351 show a composition bias toward pro residues; sequence DQPPSPLPQPPPPAAA. 7 C2H2-type zinc fingers span residues 356-378, 386-408, 454-476, 482-504, 510-532, 538-560, and 566-588; these read FACL…QHSH, FRCG…QQCH, YKCA…LRDH, YQCG…QRVH, FTCG…LRLH, YACG…RHVH, and HACG…QRVH. Thr-589 is subject to Phosphothreonine. 2 C2H2-type zinc fingers span residues 594–616 and 622–644; these read FRCP…QRTH and FTCP…LRTH. A compositionally biased stretch (low complexity) spans 644-658; sequence HAPANTPPSTTAPAA. The disordered stretch occupies residues 644 to 674; sequence HAPANTPPSTTAPAAGPQPPAPLAAARAPPA. 4 tandem repeats follow at residues 818–831, 832–842, 843–853, and 854–864. Positions 818-864 are 4 X approximate tandem repeats; sequence VQLQPLRPAPEVTTVQLQPAQEVTTVQLQPAQEVTTVQLQPAQEVTT. The interval 943 to 1059 is interaction with TAF4B; sequence DGEQTRLCVQ…LPAVQLVHTF (117 aa).

In terms of assembly, interacts with TAF4B.

Its subcellular location is the nucleus. Its function is as follows. Transcriptional activator. Binds DNA on GT-box consensus sequence 5'-TTGGTT-3'. Plays a role in spermiogenesis. The polypeptide is Zinc finger protein 628 (ZNF628) (Homo sapiens (Human)).